Here is a 344-residue protein sequence, read N- to C-terminus: MTENHYLLLTPGPLTTTKSVKEVMIYDWCTWDDEYNTMVQEVRAKLVSLATKEEEKYTTVLMQGSGTFSVEAVIGSVIPANGKILVCTNGAYGKRIVQMAEMLQIDVVVSQTEEWEPTNIVEVEKLLQEDKEITHIAVVHCETTTGIINPIVDVCKLGKQYGKVTIVDAMSSFGGIEIDIADLQIDFLISSANKCIQGVPGFGFVIAKRDELLKCKGQGRSLSLDLYDQWETMEKQNGKWRFTSPTHVVHAFYQALLELQKEGGVRARYNRYYNNQKLLVNRMGEIGFKPLVDEEYQAPIITSFIYPKQGFEFQQLYNELKRYGFVIYPGKISKVDTFGIGNIG.

N6-(pyridoxal phosphate)lysine is present on Lys-194.

The protein belongs to the class-V pyridoxal-phosphate-dependent aminotransferase family. PhnW subfamily. As to quaternary structure, homodimer. It depends on pyridoxal 5'-phosphate as a cofactor.

It catalyses the reaction (2-aminoethyl)phosphonate + pyruvate = phosphonoacetaldehyde + L-alanine. In terms of biological role, involved in phosphonate degradation. This chain is 2-aminoethylphosphonate--pyruvate transaminase, found in Bacillus cereus.